We begin with the raw amino-acid sequence, 179 residues long: Large ribosomal subunit protein uL5 (179 aa).

This sequence belongs to the universal ribosomal protein uL5 family. In terms of assembly, part of the 50S ribosomal subunit; part of the 5S rRNA/L5/L18/L25 subcomplex. Contacts the 5S rRNA and the P site tRNA. Forms a bridge to the 30S subunit in the 70S ribosome.

This is one of the proteins that bind and probably mediate the attachment of the 5S RNA into the large ribosomal subunit, where it forms part of the central protuberance. In the 70S ribosome it contacts protein S13 of the 30S subunit (bridge B1b), connecting the 2 subunits; this bridge is implicated in subunit movement. Contacts the P site tRNA; the 5S rRNA and some of its associated proteins might help stabilize positioning of ribosome-bound tRNAs. This Delftia acidovorans (strain DSM 14801 / SPH-1) protein is Large ribosomal subunit protein uL5.